Here is a 136-residue protein sequence, read N- to C-terminus: Protein PsiE homolog (136 aa).

Helical transmembrane passes span 15–35, 58–78, 82–102, and 108–128; these read AMQAVLNLALLCLGIILVVFL, VEGLVVYFLYFEFIALIVKYF, FHFPLRYFVYIGITAIVRLII, and PLAVLIYSAAILILVITLWLC.

The protein belongs to the PsiE family.

The protein resides in the cell inner membrane. The polypeptide is Protein PsiE homolog (Klebsiella pneumoniae subsp. pneumoniae (strain ATCC 700721 / MGH 78578)).